The sequence spans 291 residues: DNA N6-methyl adenine demethylase (291 aa).

Positions 85–256 (GLTLIHNFLS…RGRRIALTMR (172 aa)) constitute a Fe2OG dioxygenase domain. 171 to 173 (LEY) contacts 2-oxoglutarate. 3 residues coordinate Fe cation: His184, Asp186, and His239.

Belongs to the alkB family. In terms of assembly, interacts with top-2; the interaction is required for localization of top-2 to DNA. Also interacts with mtss-1, his-24, ule-3, C18B2.3, pgl-1, ceh-93, mcm-4 and F37C4.5. It depends on Fe(2+) as a cofactor.

It localises to the nucleus. It carries out the reaction an N(6)-methyl-2'-deoxyadenosine in DNA + 2-oxoglutarate + O2 = a 2'-deoxyadenosine in DNA + formaldehyde + succinate + CO2. Functionally, dioxygenase that specifically demethylates DNA methylated on the 6th position of adenine (N(6)-methyladenosine) DNA. N(6)-methyladenosine (m6A) DNA is involved in epigenetic transgenerational inheritance. Plays an essential role in DNA replication and repair in the germline during meiosis. Binds to components of the DNA replication machinery such as top-2, and directs their localization to DNA to control DNA replication. The sequence is that of DNA N6-methyl adenine demethylase from Caenorhabditis elegans.